Consider the following 74-residue polypeptide: Anaphase-promoting complex subunit 13 (74 aa).

Residues 33-53 are disordered; sequence LNELPEPEQDNGGTTESVKEQ.

Belongs to the APC13 family. The mammalian APC/C is composed at least of 14 distinct subunits ANAPC1, ANAPC2, CDC27/APC3, ANAPC4, ANAPC5, CDC16/APC6, ANAPC7, CDC23/APC8, ANAPC10, ANAPC11, CDC26/APC12, ANAPC13, ANAPC15 and ANAPC16 that assemble into a complex of at least 19 chains with a combined molecular mass of around 1.2 MDa; APC/C interacts with FZR1 and FBXO5.

The protein localises to the nucleus. The protein operates within protein modification; protein ubiquitination. In terms of biological role, component of the anaphase promoting complex/cyclosome (APC/C), a cell cycle-regulated E3 ubiquitin ligase that controls progression through mitosis and the G1 phase of the cell cycle. The APC/C complex acts by mediating ubiquitination and subsequent degradation of target proteins: it mainly mediates the formation of 'Lys-11'-linked polyubiquitin chains and, to a lower extent, the formation of 'Lys-48'- and 'Lys-63'-linked polyubiquitin chains. The APC/C complex catalyzes assembly of branched 'Lys-11'-/'Lys-48'-linked branched ubiquitin chains on target proteins. The polypeptide is Anaphase-promoting complex subunit 13 (ANAPC13) (Bos taurus (Bovine)).